We begin with the raw amino-acid sequence, 247 residues long: ATP synthase subunit C lysine N-methyltransferase (247 aa).

Position 1 is an N-acetylmethionine (Met-1). Residues 1 to 12 (MERVGTPEEERQ) show a composition bias toward basic and acidic residues. Residues 1–25 (MERVGTPEEERQAGPVLPTSLESDS) are disordered. A helical membrane pass occupies residues 34–54 (LITGVVGGALLTVYAVATPFI). Residues 51 to 85 (TPFITPALRKVCLPFVPATSKQVENVVRMLRHRRG) form a required for mitochondrial location region. Residues 209–247 (QRGRGGRPNQEWVGQKNLSETAGLQASSSETRSKLLDVE) form a disordered region. Polar residues predominate over residues 224–238 (KNLSETAGLQASSSE).

It belongs to the ANT/ATPSC lysine N-methyltransferase family. As to expression, ubiquitously expressed.

It localises to the mitochondrion membrane. It catalyses the reaction L-lysyl-[protein] + 3 S-adenosyl-L-methionine = N(6),N(6),N(6)-trimethyl-L-lysyl-[protein] + 3 S-adenosyl-L-homocysteine + 3 H(+). Its function is as follows. Mitochondrial protein-lysine N-methyltransferase that trimethylates ATP synthase subunit C, ATP5MC1 and ATP5MC2. Trimethylation is required for proper incorporation of the C subunit into the ATP synthase complex and mitochondrial respiration. Promotes chronic pain. Involved in persistent inflammatory and neuropathic pain: methyltransferase activity in the mitochondria of sensory neurons promotes chronic pain via a pathway that depends on the production of reactive oxygen species (ROS) and on the engagement of spinal cord microglia. This Mus musculus (Mouse) protein is ATP synthase subunit C lysine N-methyltransferase.